The sequence spans 95 residues: Secreted RxLR effector protein 20 (95 aa).

A signal peptide spans 1–20 (MQSPYIILFALVTLLGSISG). Residues 47–50 (RLLR) carry the RxLR motif.

Belongs to the RxLR effector family.

Its subcellular location is the secreted. It localises to the host nucleus. The protein localises to the host cytoplasm. Secreted effector that partially suppresses the host cell death induced by cell death-inducing proteins. The sequence is that of Secreted RxLR effector protein 20 from Plasmopara viticola (Downy mildew of grapevine).